The following is a 364-amino-acid chain: DNA replication and repair protein RecF (364 aa).

30–37 contributes to the ATP binding site; the sequence is GENGSGKT.

It belongs to the RecF family.

The protein localises to the cytoplasm. The RecF protein is involved in DNA metabolism; it is required for DNA replication and normal SOS inducibility. RecF binds preferentially to single-stranded, linear DNA. It also seems to bind ATP. The protein is DNA replication and repair protein RecF of Xylella fastidiosa (strain M12).